A 427-amino-acid chain; its full sequence is Tyrosine--tRNA ligase (427 aa).

Y39 provides a ligand contact to L-tyrosine. Positions P44–H53 match the 'HIGH' region motif. L-tyrosine contacts are provided by Y178 and Q182. A 'KMSKS' region motif is present at residues K238–T242. K241 serves as a coordination point for ATP. In terms of domain architecture, S4 RNA-binding spans I360–G417.

The protein belongs to the class-I aminoacyl-tRNA synthetase family. TyrS type 1 subfamily. Homodimer.

It is found in the cytoplasm. The enzyme catalyses tRNA(Tyr) + L-tyrosine + ATP = L-tyrosyl-tRNA(Tyr) + AMP + diphosphate + H(+). Catalyzes the attachment of tyrosine to tRNA(Tyr) in a two-step reaction: tyrosine is first activated by ATP to form Tyr-AMP and then transferred to the acceptor end of tRNA(Tyr). This is Tyrosine--tRNA ligase from Blochmanniella pennsylvanica (strain BPEN).